Here is a 42-residue protein sequence, read N- to C-terminus: Delta-hexatoxin-Ar1a (42 aa).

4 cysteine pairs are disulfide-bonded: C1-C15, C8-C20, C14-C31, and C16-C42.

The protein belongs to the neurotoxin 06 (delta-actx) family. As to expression, expressed by the venom gland.

It localises to the secreted. Inhibits tetrodotoxin-sensitive voltage-gated sodium channels (Nav) by binding to site 3. It slows the inactivation, causes a prolongation of action potential duration resulting in repetitive firing in autonomic and motor nerve fibers. Does not depolarize the resting potential. Does not affect tetrodotoxin-resistant sodium channels. This lethal neurotoxin is active on both insect and mammalian voltage-gated sodium channels. In Atrax robustus (Sydney funnel-web spider), this protein is Delta-hexatoxin-Ar1a.